Reading from the N-terminus, the 219-residue chain is Cytidylate kinase (219 aa).

Position 11–19 (11–19 (GPAGVGKTT)) interacts with ATP.

It belongs to the cytidylate kinase family. Type 1 subfamily.

The protein localises to the cytoplasm. It catalyses the reaction CMP + ATP = CDP + ADP. The catalysed reaction is dCMP + ATP = dCDP + ADP. The polypeptide is Cytidylate kinase (Oleidesulfovibrio alaskensis (strain ATCC BAA-1058 / DSM 17464 / G20) (Desulfovibrio alaskensis)).